The primary structure comprises 201 residues: Charged multivesicular body protein 6 (201 aa).

Gly-2 carries the N-myristoyl glycine lipid modification. A coiled-coil region spans residues 10 to 145; sequence QSRVTEQDKA…YQRQIDELLA (136 aa). Ser-119 carries the post-translational modification Phosphoserine. At Thr-130 the chain carries Phosphothreonine. A Type-2 MIT-interacting motif motif is present at residues 168 to 179; that stretch reads IELPEVPSEPLP. Residues 171-201 form a disordered region; sequence PEVPSEPLPEKIPEDVPVKARPRQAELVAAS. Residues 178–188 show a composition bias toward basic and acidic residues; the sequence is LPEKIPEDVPV.

Belongs to the SNF7 family. Probable core component of the endosomal sorting required for transport complex III (ESCRT-III). ESCRT-III components are thought to multimerize to form a flat lattice on the perimeter membrane of the endosome. Several assembly forms of ESCRT-III may exist that interact and act sequentially. Interacts with VPS4A; the interaction is direct. Interacts with VPS4B; the interaction is direct. Interacts with CHMP4A, CHMP4B and CHMP4C. Interacts with SNF8, VPS25 and VPS36. In terms of processing, ISGylated in a CHMP5-dependent manner. Isgylation weakens its interaction with VPS4A.

The protein resides in the endomembrane system. The protein localises to the endosome membrane. It is found in the late endosome membrane. Its subcellular location is the membrane. Functionally, probable core component of the endosomal sorting required for transport complex III (ESCRT-III) which is involved in multivesicular bodies (MVBs) formation and sorting of endosomal cargo proteins into MVBs. MVBs contain intraluminal vesicles (ILVs) that are generated by invagination and scission from the limiting membrane of the endosome and mostly are delivered to lysosomes enabling degradation of membrane proteins, such as stimulated growth factor receptors, lysosomal enzymes and lipids. The MVB pathway appears to require the sequential function of ESCRT-O, -I,-II and -III complexes. ESCRT-III proteins mostly dissociate from the invaginating membrane before the ILV is released. The ESCRT machinery also functions in topologically equivalent membrane fission events, such as the terminal stages of cytokinesis and the budding of enveloped viruses (lentiviruses). ESCRT-III proteins are believed to mediate the necessary vesicle extrusion and/or membrane fission activities, possibly in conjunction with the AAA ATPase VPS4. In the ESCRT-III complex, it probably serves as an acceptor for the ESCRT-II complex on endosomal membrane. This Pongo abelii (Sumatran orangutan) protein is Charged multivesicular body protein 6 (CHMP6).